The sequence spans 498 residues: Glutamate--tRNA ligase (498 aa).

A 'HIGH' region motif is present at residues 12–22; sequence PSPTGHLHIGN. Residues 259–263 carry the 'KMSKS' region motif; that stretch reads KLSKR. Residue K262 coordinates ATP.

The protein belongs to the class-I aminoacyl-tRNA synthetase family. Glutamate--tRNA ligase type 1 subfamily. Monomer.

It localises to the cytoplasm. It catalyses the reaction tRNA(Glu) + L-glutamate + ATP = L-glutamyl-tRNA(Glu) + AMP + diphosphate. Its function is as follows. Catalyzes the attachment of glutamate to tRNA(Glu) in a two-step reaction: glutamate is first activated by ATP to form Glu-AMP and then transferred to the acceptor end of tRNA(Glu). In Limosilactobacillus fermentum (strain NBRC 3956 / LMG 18251) (Lactobacillus fermentum), this protein is Glutamate--tRNA ligase.